The following is a 454-amino-acid chain: UDP-N-acetylmuramate--L-alanine ligase (454 aa).

113-119 (GSHGKTT) serves as a coordination point for ATP.

It belongs to the MurCDEF family.

It localises to the cytoplasm. The catalysed reaction is UDP-N-acetyl-alpha-D-muramate + L-alanine + ATP = UDP-N-acetyl-alpha-D-muramoyl-L-alanine + ADP + phosphate + H(+). It participates in cell wall biogenesis; peptidoglycan biosynthesis. Its function is as follows. Cell wall formation. The polypeptide is UDP-N-acetylmuramate--L-alanine ligase (Aquifex aeolicus (strain VF5)).